Consider the following 541-residue polypeptide: Putative acyl-CoA dehydrogenase AidB (541 aa).

Residues 182–191, T185, S191, 216–218, S218, 423–433, and N429 each bind FAD; these read MGMTEKQGGS, FFS, and IWEGSGNIMCL. The dsDNA-binding stretch occupies residues 445–541; the sequence is VYDLLSEAFV…LLRATGGVCV (97 aa).

The protein belongs to the acyl-CoA dehydrogenase family. Homotetramer. Dimer of dimers. The cofactor is FAD.

It is found in the cytoplasm. Functionally, part of the adaptive DNA-repair response to alkylating agents. Could prevent alkylation damage by protecting DNA and destroying alkylating agents that have yet to reach their DNA target. Binds to double-stranded DNA with a preference for a DNA region that includes its own promoter. Shows weak isovaleryl-CoA dehydrogenase activity in vitro. The polypeptide is Putative acyl-CoA dehydrogenase AidB (aidB) (Escherichia coli (strain K12)).